The primary structure comprises 152 residues: MGLSNKFKSFFFLDEEEEYYEEEVAREPEPMQKKTKKEKPSKNRFYAVEEEDAKVVSMQGAQYSSRMVLAEPRVYAEAQELADYLKDYKTVVVNLQRISHDQATRIVDFLSGTVYALGGDIQRVGNNIFLCTPDNVEVNGSISEMLDEQNFM.

Residues 23–32 (EVAREPEPMQ) show a composition bias toward basic and acidic residues. A disordered region spans residues 23 to 42 (EVAREPEPMQKKTKKEKPSK).

The protein belongs to the SepF family. As to quaternary structure, homodimer. Interacts with FtsZ.

It is found in the cytoplasm. Functionally, cell division protein that is part of the divisome complex and is recruited early to the Z-ring. Probably stimulates Z-ring formation, perhaps through the cross-linking of FtsZ protofilaments. Its function overlaps with FtsA. The polypeptide is Cell division protein SepF (Listeria welshimeri serovar 6b (strain ATCC 35897 / DSM 20650 / CCUG 15529 / CIP 8149 / NCTC 11857 / SLCC 5334 / V8)).